A 314-amino-acid polypeptide reads, in one-letter code: Ribosomal RNA small subunit methyltransferase H (314 aa).

Residues 37–39, D56, F86, D108, and H115 contribute to the S-adenosyl-L-methionine site; that span reads GGH.

This sequence belongs to the methyltransferase superfamily. RsmH family.

It localises to the cytoplasm. It carries out the reaction cytidine(1402) in 16S rRNA + S-adenosyl-L-methionine = N(4)-methylcytidine(1402) in 16S rRNA + S-adenosyl-L-homocysteine + H(+). Functionally, specifically methylates the N4 position of cytidine in position 1402 (C1402) of 16S rRNA. The sequence is that of Ribosomal RNA small subunit methyltransferase H from Leptospira biflexa serovar Patoc (strain Patoc 1 / ATCC 23582 / Paris).